Consider the following 289-residue polypeptide: (3R)-3-[(carboxymethyl)amino]fatty acid oxygenase/decarboxylase (289 aa).

A (3R)-3-[(carboxymethyl)amino]fatty acid is bound by residues Tyr65, Tyr70, and Gly93. Fe(2+)-binding residues include His97 and Asp99. A (3R)-3-[(carboxymethyl)amino]fatty acid-binding residues include Tyr100 and Lys158. Fe(2+) is bound at residue His260. 2-oxoglutarate is bound at residue His264. Position 275 (Arg275) interacts with a (3R)-3-[(carboxymethyl)amino]fatty acid.

The protein belongs to the TfdA dioxygenase family. Fe(2+) is required as a cofactor.

The catalysed reaction is a (3R)-3-[(carboxymethyl)amino]fatty acid + 2 2-oxoglutarate + 2 O2 = a (3R)-3-isocyanyl-fatty acid + 2 succinate + 3 CO2 + 2 H2O. It catalyses the reaction a (3R)-3-[(carboxymethyl)amino]fatty acid + 2-oxoglutarate + O2 = a (3R)-3-{[carboxy(hydroxy)methyl]amino}fatty acid + succinate + CO2. The enzyme catalyses a (3R)-3-{[carboxy(hydroxy)methyl]amino}fatty acid + 2-oxoglutarate + O2 = a (3R)-3-isocyanyl-fatty acid + succinate + 2 CO2 + 2 H2O. In terms of biological role, involved in the biosynthesis of a unique class of isonitrile lipopeptides (INLPs) that seem to play a role in metal acquisition in M.marinum. Catalyzes the conversion of (3R)-3-[(carboxymethyl)amino]fatty acids to (3R)-3-isocyanyl-fatty acids through an oxidative decarboxylation mechanism, thereby generating the isonitrile group of INLPs. In Mycobacterium marinum (strain ATCC BAA-535 / M), this protein is (3R)-3-[(carboxymethyl)amino]fatty acid oxygenase/decarboxylase.